Consider the following 607-residue polypeptide: MDTGGHGCSLSSLYVGDLHPDVTESMLYEMFSPIGNILSIRVCRDVATRRSLGYAYINFQQPADAERALDTMNFEVIKGQPIRIMWSHRDPGLRKSGMGNIFIKNLENSIDNKALYDTFSTFGSILSSKVVYNEHGSRGFGFVHFETHEAAQKAINTMNGMLLNDRKVFVGHFKSRQKREAELGARALGFTNIYVKNLHANVDEQRLQDLFSQFGNMQSVKVMRDSNGQSRGFGFVNFEKHEEAQKAVDHMNGKEVSGQLLYVGRAQKRAERQSELKRRFEQMKQERQNRYQGVNLYVKNLDDSINDERLKEVFSTYGVITSAKVMTESSHSKGFGFVCFSSPEEATKAVTEMNGRIVGTKPLYVALAQRKEERKAILTNQYRRRPSHPVLSSFQQPTSYLLPAVPQSTAQAVYYSSGSITPMQPDPRWTAQPHGPPSTCPPAASVVQPLSTTQHPCIHLRGASQVSSQVPHTQRVVNIGTQTTGPGGEGSSIPGQLLVPHRGTSAVHSAHGVQESAVYVPGHQPLTVSMLAAAPLHEQKQMIGERLYSLIHDACAPLTGKITGMLLELDNLELLLLLESPESLHAKIEEAVAVLQVHREMESTDRN.

4 RRM domains span residues 11 to 89, 99 to 175, 191 to 268, and 294 to 370; these read SSLY…WSHR, GNIF…HFKS, TNIY…RAQK, and VNLY…LAQR. A PABC domain is found at 523 to 600; sequence HQPLTVSMLA…AVAVLQVHRE (78 aa).

This sequence belongs to the polyadenylate-binding protein type-1 family. Expressed in ovary and testis.

It is found in the cytoplasm. In terms of biological role, poly(A)-binding protein involved in oocyte maturation and early embryo development. It is required for cytosolic mRNA polyadenylation and translational activation of maternally stored mRNA in oocytes. This Mus musculus (Mouse) protein is Polyadenylate-binding protein 1-like.